Consider the following 198-residue polypeptide: Pyridoxal 5'-phosphate synthase subunit PdxT (198 aa).

G52–S54 provides a ligand contact to L-glutamine. Residue C84 is the Nucleophile of the active site. Residues R116 and I143–R144 each bind L-glutamine. Active-site charge relay system residues include H179 and E181.

Belongs to the glutaminase PdxT/SNO family. In the presence of PdxS, forms a dodecamer of heterodimers. Only shows activity in the heterodimer.

It catalyses the reaction aldehydo-D-ribose 5-phosphate + D-glyceraldehyde 3-phosphate + L-glutamine = pyridoxal 5'-phosphate + L-glutamate + phosphate + 3 H2O + H(+). It carries out the reaction L-glutamine + H2O = L-glutamate + NH4(+). It functions in the pathway cofactor biosynthesis; pyridoxal 5'-phosphate biosynthesis. Catalyzes the hydrolysis of glutamine to glutamate and ammonia as part of the biosynthesis of pyridoxal 5'-phosphate. The resulting ammonia molecule is channeled to the active site of PdxS. This is Pyridoxal 5'-phosphate synthase subunit PdxT from Caldivirga maquilingensis (strain ATCC 700844 / DSM 13496 / JCM 10307 / IC-167).